Here is a 121-residue protein sequence, read N- to C-terminus: MKRADDFQQRRAHLANLSDEELQTRFWEMAEKIVDPLLDLGKKNTTPSIERSVLLRMGFSSLEAKAIVDKTMDRGLMGKGAGHIVYKIAKEKNISVREAGLALSEGKYWDDAIQIFKGGVK.

Heterotetramer of 2 alpha (OraS) and 2 beta (OraE) subunits.

It catalyses the reaction D-ornithine = (2R,4S)-2,4-diaminopentanoate. Increased activity in the presence of dithiothreitol (DTT) in vitro. Inhibited by 1 mM potassium phosphate and potassium chloride. Inhibited by L-alpha-ornithine, D,L-alpha-lysine, L-beta-lysine (50%-60%), L-alpha-lysine (26%) and by delta-amino-n-valeric acid to a lesser extent. Significant decrease in activity is observed in the presence of 0.2 mM p-chloromercuribenzoate, N-ethylmaleimide and also by 2 mM iodoacetate to a lesser extent but not inhibited by arsenite. Functionally, component of a complex that catalyzes the reversible migration of the omega amino group of D-ornithine to C-4 to form (2R,4S)-2,4-diaminopentanoic acid. The role of OraS remains obscure; however, it seems to be required for a correct folding of the OraE subunit. The complex is active only on D-ornithine and 2,4-diaminopentanoic acid and not active on L-ornithine, L-beta-lysine, L-alpha-lysine or D-alpha-lysine. The polypeptide is D-ornithine 4,5-aminomutase subunit alpha (oraS) (Acetoanaerobium sticklandii (strain ATCC 12662 / DSM 519 / JCM 1433 / CCUG 9281 / NCIMB 10654 / HF) (Clostridium sticklandii)).